A 240-amino-acid polypeptide reads, in one-letter code: ATP synthase subunit a (240 aa).

Helical transmembrane passes span 21 to 41, 78 to 98, 116 to 136, 183 to 203, and 212 to 232; these read LSNLMMTFIVCLIVFVFCVWG, IFLPLGLTLIFYILVSNLIGV, DAVMTLTLSTMIIALTHYYGI, ILLSLLVGLATTSIFGFFGAA, and FSVFIGAIQSYVFVMLTMVYM.

This sequence belongs to the ATPase A chain family. As to quaternary structure, F-type ATPases have 2 components, CF(1) - the catalytic core - and CF(0) - the membrane proton channel. CF(1) has five subunits: alpha(3), beta(3), gamma(1), delta(1), epsilon(1). CF(0) has three main subunits: a(1), b(2) and c(9-12). The alpha and beta chains form an alternating ring which encloses part of the gamma chain. CF(1) is attached to CF(0) by a central stalk formed by the gamma and epsilon chains, while a peripheral stalk is formed by the delta and b chains.

The protein localises to the cell membrane. Key component of the proton channel; it plays a direct role in the translocation of protons across the membrane. This chain is ATP synthase subunit a, found in Oceanobacillus iheyensis (strain DSM 14371 / CIP 107618 / JCM 11309 / KCTC 3954 / HTE831).